The chain runs to 137 residues: DNA-directed RNA polymerase I subunit RPA14 (137 aa).

A disordered region spans residues 100 to 137 (PPAQDFSAAPIQVSTTEKKETSIGVSATGGKKTTFADE). Phosphoserine is present on serine 121.

As to quaternary structure, component of the RNA polymerase I (Pol I) complex consisting of 14 subunits: RPA135, RPA190, RPC40, RPA14, RPB5, RPO26, RPA43, RPB8, RPA12, RPB10, RPC19, RPC10, RPA49 and RPA34. The complex is composed of a horseshoe-shaped core containing ten subunits (RPA135, RPA190, RPB5, RPO26, RPB8, RPB10, RPC10, RPA12, RPC19 and RPC40) where RPA135 and RPA190 form the DNA-binding cleft. Outside of the core, RPA14 and RPA43 form the stalk that mediates interactions with transcription initiation factors and newly synthesized RNA. Post-translationally, the N-terminus is blocked.

It is found in the nucleus. Its subcellular location is the nucleolus. DNA-dependent RNA polymerases catalyze the transcription of DNA into RNA using the four ribonucleoside triphosphates as substrates. Component of RNA polymerase I (Pol I) which synthesizes ribosomal RNA precursors. RPA14 seems to play a role in the stability of subunits RPO26 and RPA43. In vitro, the RPA14-RPA43 subcomplex binds single-stranded RNA. The polypeptide is DNA-directed RNA polymerase I subunit RPA14 (RPA14) (Saccharomyces cerevisiae (strain ATCC 204508 / S288c) (Baker's yeast)).